The sequence spans 291 residues: MTQNRAELNRNLAQMLKGGVIMDVTTPEQAKIAQDAGACAVMALERIPADIRAAGGVSRMSDPAMIKGIQEAVSIPVMAKVRIGHIAEARILQAIEIDYIDESEVLSPADDVYHIDKNQFDVPFVCGAKNLGEALRRIAEGAAMIRTKGEPGTGDVIQAVRHMRTMNKQIRELVGLRDDEVYEAAKQLAVPYDLAKYVHDNGRLPVVNFAAGGVATPADAALMMELGAEGVFVGSGIFKSGDPAKRAAAIVKATANWQDADLLAKLSENLGEAMVGINEDEIQTIMAARGE.

D-ribose 5-phosphate is bound at residue aspartate 23. Lysine 80 (schiff-base intermediate with D-ribose 5-phosphate) is an active-site residue. Glycine 152 contacts D-ribose 5-phosphate. Arginine 164 provides a ligand contact to D-glyceraldehyde 3-phosphate. Residues glycine 213 and 234–235 (GS) each bind D-ribose 5-phosphate.

This sequence belongs to the PdxS/SNZ family. As to quaternary structure, in the presence of PdxT, forms a dodecamer of heterodimers.

The enzyme catalyses aldehydo-D-ribose 5-phosphate + D-glyceraldehyde 3-phosphate + L-glutamine = pyridoxal 5'-phosphate + L-glutamate + phosphate + 3 H2O + H(+). It participates in cofactor biosynthesis; pyridoxal 5'-phosphate biosynthesis. Functionally, catalyzes the formation of pyridoxal 5'-phosphate from ribose 5-phosphate (RBP), glyceraldehyde 3-phosphate (G3P) and ammonia. The ammonia is provided by the PdxT subunit. Can also use ribulose 5-phosphate and dihydroxyacetone phosphate as substrates, resulting from enzyme-catalyzed isomerization of RBP and G3P, respectively. The chain is Pyridoxal 5'-phosphate synthase subunit PdxS from Bifidobacterium longum (strain NCC 2705).